The primary structure comprises 137 residues: Putative pre-16S rRNA nuclease (137 aa).

It belongs to the YqgF nuclease family.

It is found in the cytoplasm. Functionally, could be a nuclease involved in processing of the 5'-end of pre-16S rRNA. The protein is Putative pre-16S rRNA nuclease of Anaeromyxobacter dehalogenans (strain 2CP-C).